Consider the following 92-residue polypeptide: Small ribosomal subunit protein uS19 (92 aa).

Belongs to the universal ribosomal protein uS19 family.

Protein S19 forms a complex with S13 that binds strongly to the 16S ribosomal RNA. The chain is Small ribosomal subunit protein uS19 from Vibrio campbellii (strain ATCC BAA-1116).